A 255-amino-acid chain; its full sequence is Protein SCO2 homolog, mitochondrial (255 aa).

The transit peptide at 1 to 41 (MLLALGPKAWPKLSQFKPLLRISGGETLHRNSRHWAGQGQR) directs the protein to the mitochondrion. Over 42 to 49 (QGPGLRTR) the chain is Mitochondrial matrix. The helical transmembrane segment at 50–67 (LLITALFGAGLGWAWLAA) threads the bilayer. The Mitochondrial intermembrane segment spans residues 68-255 (RAEKEQWRQQ…HIAAFHSVLP (188 aa)). Residues 74–248 (WRQQQRTEAL…IVESIRRHIA (175 aa)) enclose the Thioredoxin domain. Residues Cys-122, Cys-126, and His-213 each coordinate Cu cation. A disulfide bond links Cys-122 and Cys-126.

Belongs to the SCO1/2 family. In terms of assembly, homodimer. Interacts with COA6. Found in a complex with TMEM177, COX20, COA6, MT-CO2/COX2, COX18 and SCO1. Interacts with TMEM177 in a COX20-dependent manner. Interacts with COX20 in a MT-CO2/COX2- and COX18-dependent manner. Interacts with COX16. Expressed in retina, retinal pigment epithelium, and sclera.

It is found in the mitochondrion inner membrane. Its function is as follows. Copper metallochaperone essential for the synthesis and maturation of cytochrome c oxidase subunit II (MT-CO2/COX2) by facilitating the incorporation of copper into the Cu(A) site of MT-CO2/COX2. Could also act as a thiol-disulfide oxidoreductase to regulate the redox state of the cysteines in SCO1 during maturation of MT-CO2/COX2. This is Protein SCO2 homolog, mitochondrial (Sco2) from Mus musculus (Mouse).